The primary structure comprises 468 residues: MPDVPWIEKYRPRKLSEIVNQEQALEKVRAWIESWLHGNPPKKKALLLAGPPGSGKTTTVYALAHEYNFEVIELNASDERTYNKIARYVQAAYTMDIMGKRRKIIFLDEADNIEPSGAPEIAKLIDKARNPIIMAANHYWEVPKEIRDRAELVEYKRLNQRDVISALVRILKREGITVPKEILTEIAKRSSGDLRAAINDLQTIVAGGYEDAKYVLAYRDVEKTVFQSLGMVFSSDNAKRAKLALMNLDMSPDEFLLWVDENIPHMYLKPEEMARAYEAISRADIYLGRAQRTGNYSLWKYAIDMMTAGVAVAGTKKKGFAKFYPPNTLKMLAESKEERSIRDSIIKKIMKEMHMSKLEALETMKILRTIFENNLDLAAHFTVFLELTEKEVEFLAGKEKAGTIWGKTLSIRRRIKETEKIEEKAVEEKVEEEEAEEEEEEERKEEEKPKAEKKKGKQVTLFDFIKKN.

An ATP-binding site is contributed by 50 to 57; the sequence is GPPGSGKT. Positions 422–456 are disordered; sequence EEKAVEEKVEEEEAEEEEEEERKEEEKPKAEKKKG. Over residues 429–444 the composition is skewed to acidic residues; it reads KVEEEEAEEEEEEERK.

It belongs to the activator 1 small subunits family. RfcL subfamily. As to quaternary structure, heteromultimer composed of small subunits (RfcS) and large subunits (RfcL).

Functionally, part of the RFC clamp loader complex which loads the PCNA sliding clamp onto DNA. This Pyrococcus horikoshii (strain ATCC 700860 / DSM 12428 / JCM 9974 / NBRC 100139 / OT-3) protein is Replication factor C large subunit.